The sequence spans 345 residues: Phosphoribosylformylglycinamidine cyclo-ligase (345 aa).

Belongs to the AIR synthase family.

The protein localises to the cytoplasm. The enzyme catalyses 2-formamido-N(1)-(5-O-phospho-beta-D-ribosyl)acetamidine + ATP = 5-amino-1-(5-phospho-beta-D-ribosyl)imidazole + ADP + phosphate + H(+). Its pathway is purine metabolism; IMP biosynthesis via de novo pathway; 5-amino-1-(5-phospho-D-ribosyl)imidazole from N(2)-formyl-N(1)-(5-phospho-D-ribosyl)glycinamide: step 2/2. The polypeptide is Phosphoribosylformylglycinamidine cyclo-ligase (Escherichia coli (strain SE11)).